Here is a 156-residue protein sequence, read N- to C-terminus: Putative pre-16S rRNA nuclease (156 aa).

It belongs to the YqgF nuclease family.

It is found in the cytoplasm. Its function is as follows. Could be a nuclease involved in processing of the 5'-end of pre-16S rRNA. This Caulobacter vibrioides (strain ATCC 19089 / CIP 103742 / CB 15) (Caulobacter crescentus) protein is Putative pre-16S rRNA nuclease.